The chain runs to 218 residues: MIP18 family protein galla-1 (218 aa).

A disordered region spans residues 1-59; sequence MLSYIKRKLSESDSGVSSVATVTSSCGGDSGRAGGTGSSESGTGSSSASISGRSQNADE. The segment covering 12 to 27 has biased composition (low complexity); the sequence is SDSGVSSVATVTSSCG. A Phosphoserine modification is found at serine 14. Positions 28–37 are enriched in gly residues; sequence GDSGRAGGTG. Low complexity predominate over residues 38–54; it reads SSESGTGSSSASISGRS. Serine 65 carries the phosphoserine modification.

It belongs to the MIP18 family. As to quaternary structure, component of the CGX complex composed of crb, galla (galla-1 or galla-2) and Xpd. Interacts with crb (via intracellular domain). Is not able to interact with Xpd in the absence of crb.

The protein resides in the apical cell membrane. It localises to the cytoplasm. It is found in the cytoskeleton. Its subcellular location is the spindle. Its function is as follows. Component of the crb-galla-Xpd (CGX) complex which is essential for proper mitotic chromosome segregation in early embryos. The CGX complex is also required for cell proliferation in developing wing disks. In the CGX complex, acts with crb to recruit Xpd thus forming the functional complex. The sequence is that of MIP18 family protein galla-1 from Drosophila melanogaster (Fruit fly).